Consider the following 183-residue polypeptide: Calmodulin-like protein 3 (183 aa).

4 consecutive EF-hand domains span residues 7–42 (EQIA…LGQS), 43–78 (PTEA…KLRD), 80–115 (GAED…LSDP), and 116–151 (LSDD…KRRQ). Ca(2+)-binding residues include aspartate 20, aspartate 22, aspartate 24, threonine 26, glutamate 31, aspartate 56, aspartate 58, serine 60, serine 62, glutamate 67, aspartate 93, aspartate 95, asparagine 97, glutamate 104, aspartate 129, aspartate 131, aspartate 133, glutamine 135, and glutamate 140. The tract at residues 154 to 183 (MEGHGSGGHRSSNSHKKSGCCGPNSSCTIL) is disordered. Residues cysteine 173 and cysteine 174 are each lipidated (S-palmitoyl cysteine). Cysteine 180 is subject to Cysteine methyl ester. Cysteine 180 carries S-farnesyl cysteine lipidation. Residues 181-183 (TIL) constitute a propeptide, removed in mature form.

It belongs to the calmodulin family.

It is found in the membrane. In terms of biological role, potential calcium sensor. In Oryza sativa subsp. japonica (Rice), this protein is Calmodulin-like protein 3 (CML3).